The primary structure comprises 134 residues: Small ribosomal subunit protein uS9 (134 aa).

Residues 113 to 134 (REVERKKYGLKKARRAPQFSKR) are disordered. Residues 120-134 (YGLKKARRAPQFSKR) show a composition bias toward basic residues.

The protein belongs to the universal ribosomal protein uS9 family.

In Thermotoga petrophila (strain ATCC BAA-488 / DSM 13995 / JCM 10881 / RKU-1), this protein is Small ribosomal subunit protein uS9.